A 156-amino-acid chain; its full sequence is Small ribosomal subunit protein uS7 (156 aa).

It belongs to the universal ribosomal protein uS7 family. As to quaternary structure, part of the 30S ribosomal subunit. Contacts proteins S9 and S11.

Its function is as follows. One of the primary rRNA binding proteins, it binds directly to 16S rRNA where it nucleates assembly of the head domain of the 30S subunit. Is located at the subunit interface close to the decoding center, probably blocks exit of the E-site tRNA. The sequence is that of Small ribosomal subunit protein uS7 from Maricaulis maris (strain MCS10) (Caulobacter maris).